The primary structure comprises 504 residues: Carnosic acid synthase (504 aa).

Residues 4-24 (FIILSLAFIAAWVVYSRWSEY) traverse the membrane as a helical segment. Cysteine 447 contributes to the heme binding site.

Belongs to the cytochrome P450 family. Heme serves as cofactor. Expressed in glandular trichomes of young leaves.

The protein resides in the membrane. It catalyses the reaction 11-hydroxyferruginol + 3 reduced [NADPH--hemoprotein reductase] + 3 O2 = carnosate + 3 oxidized [NADPH--hemoprotein reductase] + 4 H2O + 4 H(+). The catalysed reaction is miltiradiene + 2 reduced [NADPH--hemoprotein reductase] + 2 O2 = miltiradien-20-al + 2 oxidized [NADPH--hemoprotein reductase] + 3 H2O + 2 H(+). It carries out the reaction ferruginol + 3 reduced [NADPH--hemoprotein reductase] + 3 O2 = pisiferate + 3 oxidized [NADPH--hemoprotein reductase] + 4 H2O + 4 H(+). The protein operates within secondary metabolite biosynthesis; terpenoid biosynthesis. Its function is as follows. Monooxygenase involved in the biosynthesis of carnosate, a potent antioxidant labdane-related diterpene natural products. Catalyzes the oxidation of 11-hydroxyferruginol to produce carnosate. Mediates the conversion of miltiradien into miltiradien-20-al. Also involved in the production of pisiferic acid and derivative products from ferruginol. The sequence is that of Carnosic acid synthase from Rosmarinus officinalis (Rosemary).